The chain runs to 31 residues: Cytochrome b6-f complex subunit 6 (31 aa).

The helical transmembrane segment at 4–24 (VVSYLGILAAFALVTIGIFLV) threads the bilayer.

This sequence belongs to the PetL family. In terms of assembly, the 4 large subunits of the cytochrome b6-f complex are cytochrome b6, subunit IV (17 kDa polypeptide, PetD), cytochrome f and the Rieske protein, while the 4 small subunits are PetG, PetL, PetM and PetN. The complex functions as a dimer.

It is found in the plastid. It localises to the chloroplast thylakoid membrane. Its function is as follows. Component of the cytochrome b6-f complex, which mediates electron transfer between photosystem II (PSII) and photosystem I (PSI), cyclic electron flow around PSI, and state transitions. PetL is important for photoautotrophic growth as well as for electron transfer efficiency and stability of the cytochrome b6-f complex. The sequence is that of Cytochrome b6-f complex subunit 6 from Mesostigma viride (Green alga).